A 221-amino-acid chain; its full sequence is Intraflagellar transport-associated protein (221 aa).

Residue Ser59 is modified to Phosphoserine.

Interacts with IFT122; the interaction associates IFTAP with IFT-A complex.

Functionally, seems to play a role in ciliary BBSome localization, maybe through interaction with IFT-A complex. The protein is Intraflagellar transport-associated protein of Homo sapiens (Human).